Here is a 218-residue protein sequence, read N- to C-terminus: Cytochrome b6 (218 aa).

A helical transmembrane segment spans residues 35 to 55; the sequence is IFYCLGGITLVCFLIQFATGF. Cysteine 38 is a binding site for heme c. Positions 89 and 103 each coordinate heme b. Transmembrane regions (helical) follow at residues 93–113, 119–139, and 189–209; these read ASMM…TGGF, LTWV…VTGY, and LHTF…FLMI. Positions 190 and 205 each coordinate heme b.

This sequence belongs to the cytochrome b family. PetB subfamily. The 4 large subunits of the cytochrome b6-f complex are cytochrome b6, subunit IV (17 kDa polypeptide, PetD), cytochrome f and the Rieske protein, while the 4 small subunits are PetG, PetL, PetM and PetN. The complex functions as a dimer. It depends on heme b as a cofactor. Heme c is required as a cofactor.

It is found in the cellular thylakoid membrane. Component of the cytochrome b6-f complex, which mediates electron transfer between photosystem II (PSII) and photosystem I (PSI), cyclic electron flow around PSI, and state transitions. In Prochlorococcus marinus (strain MIT 9515), this protein is Cytochrome b6.